The chain runs to 670 residues: Sodium/potassium/calcium exchanger 2 (670 aa).

Residues 1 to 38 are Cytoplasmic-facing; that stretch reads MDLHQSATVRLLQEWCSHESPSGCRRHYNTRKKLKLIR. Residues 39 to 59 traverse the membrane as a helical segment; the sequence is VIGLVMGLVAVSTVPFSISAF. At 60–133 the chain is on the extracellular side; sequence TETYSQNNRG…DVFSLEERRK (74 aa). Disordered stretches follow at residues 67 to 86 and 91 to 122; these read NRGE…HRQR and LNDK…GDYP. Positions 106 to 122 are enriched in basic and acidic residues; it reads QEDRSENGTDHAQGDYP. Residue Asn-112 is glycosylated (N-linked (GlcNAc...) asparagine). A helical membrane pass occupies residues 134–154; sequence GAIILHVIGMIYMFIALAIVC. Over 155 to 179 the chain is Cytoplasmic; sequence DEFFVPSLTVITEKLGISDDVAGAT. The Alpha-1 repeat unit spans residues 175–215; the sequence is VAGATFMAAGGSAPELFTSLIGVFIAHSNVGIGTIVGSAVF. A helical membrane pass occupies residues 180-200; sequence FMAAGGSAPELFTSLIGVFIA. Over 201–205 the chain is Extracellular; sequence HSNVG. Residues 206-226 form a helical membrane-spanning segment; the sequence is IGTIVGSAVFNILFVIGMCAL. Residues 227–244 are Cytoplasmic-facing; it reads FSREILNLTWWPLFRDVS. Residues 245 to 265 form a helical membrane-spanning segment; the sequence is FYIVDLIMLIIFFLDNVIMWW. Residue Glu-266 is a topological domain, extracellular. Residues 267 to 287 traverse the membrane as a helical segment; sequence SLLLLTAYFAYVVFMKFNVQV. Over 288–506 the chain is Cytoplasmic; it reads ERWVKQMINR…PDVRKPASKK (219 aa). The disordered stretch occupies residues 312 to 335; sequence ASTAGDKEEPTLPNKPRLQRGGSS. Ser-337 and Ser-341 each carry phosphoserine. 2 disordered regions span residues 394–414 and 450–471; these read KCQV…DYAA and AADA…LSLS. A helical membrane pass occupies residues 507-527; sequence FFPITFFGSITWIAVFSYLMV. At 528 to 542 the chain is on the extracellular side; that stretch reads WWAHQVGETIGISEE. A helical membrane pass occupies residues 543-563; that stretch reads IMGLTILAAGTSIPDLITSVI. An Alpha-2 repeat occupies 550 to 581; that stretch reads AAGTSIPDLITSVIVARKGLGDMAVSSSVGSN. At 564–578 the chain is on the cytoplasmic side; sequence VARKGLGDMAVSSSV. A helical transmembrane segment spans residues 579 to 599; that stretch reads GSNIFDITVGLPLPWLLYTII. Topologically, residues 600–611 are extracellular; that stretch reads HRFKPVTVSSNG. A helical membrane pass occupies residues 612–632; that stretch reads LFCAIVLLFIMLIFVILSIAL. At 633–639 the chain is on the cytoplasmic side; sequence CKWRMNK. The helical transmembrane segment at 640–660 threads the bilayer; it reads ILGFIMFGLYFAFLVVSVLLE. Over 661-670 the chain is Extracellular; it reads DKVLECPVSI.

The protein belongs to the Ca(2+):cation antiporter (CaCA) (TC 2.A.19) family. SLC24A subfamily. In terms of tissue distribution, expressed abundantly in all regions of the brain and weakly in the eye, large intestine and adrenal tissue.

The protein resides in the cell membrane. The catalysed reaction is Ca(2+)(out) + K(+)(out) + 4 Na(+)(in) = Ca(2+)(in) + K(+)(in) + 4 Na(+)(out). In terms of biological role, calcium, potassium:sodium antiporter that transports 1 Ca(2+) and 1 K(+) in exchange for 4 Na(+). Required for learming and memory by regulating neuronal Ca(2+), which is essential for the development of synaptic plasticity. This is Sodium/potassium/calcium exchanger 2 (Slc24a2) from Rattus norvegicus (Rat).